A 313-amino-acid polypeptide reads, in one-letter code: Ribosomal protein L11 methyltransferase (313 aa).

Residues threonine 164, glycine 185, aspartate 207, and asparagine 249 each coordinate S-adenosyl-L-methionine.

It belongs to the methyltransferase superfamily. PrmA family.

Its subcellular location is the cytoplasm. The catalysed reaction is L-lysyl-[protein] + 3 S-adenosyl-L-methionine = N(6),N(6),N(6)-trimethyl-L-lysyl-[protein] + 3 S-adenosyl-L-homocysteine + 3 H(+). Its function is as follows. Methylates ribosomal protein L11. The sequence is that of Ribosomal protein L11 methyltransferase from Clostridium botulinum (strain Alaska E43 / Type E3).